Here is a 317-residue protein sequence, read N- to C-terminus: Malate dehydrogenase (317 aa).

Residues 15–20 (GSGNIG) and aspartate 39 contribute to the NAD(+) site. The substrate site is built by arginine 88 and arginine 94. NAD(+) contacts are provided by residues asparagine 101 and 124-126 (VTN). Positions 126 and 157 each coordinate substrate. Catalysis depends on histidine 181, which acts as the Proton acceptor.

It belongs to the LDH/MDH superfamily. MDH type 3 family.

It catalyses the reaction (S)-malate + NAD(+) = oxaloacetate + NADH + H(+). Functionally, catalyzes the reversible oxidation of malate to oxaloacetate. The polypeptide is Malate dehydrogenase (Ehrlichia ruminantium (strain Gardel)).